A 503-amino-acid polypeptide reads, in one-letter code: MFYTVIWIFCATLLAILFGGVRKPKRFPPGPAWYPIVGSALQVSQLRCRLGMFCKVIDVFARQYVNPYGFYGLKIGKDKVVIAYTNDAISEMMTNEDIDGRPDGIFYRLRTFNSRLGVLLTDGEMWVEQRRFILRHLKNFGFARSGMMDIVHNEATCLLQDLKDKVLKSGGKQTRIEMHDLTSVYVLNTLWCMLSGRRYEPGSPEITQLLETFFELFKNIDMVGALFSHFPLLRFIAPNFSGYNGFVESHRSLYTFMSKEIELHRLTYKNYDEPRDLMDSYLRAQDEGNDEKGMFSDQSLLAICLDMFLAGSETTNKSLGFCFMHLVLQPEIQERAFQEIKEVVGLERIPEWSRDRTKLPYCEAITLEAVRMFMLHTFGIPHRAVCDTRLSGYEIPKDTMVIACFRGMLINPVDFPDPESFNPDRYLFDGHLKLPEAFNPFGFGRHRCMGDLLGRQNLFMFTTTVLQNFKMVAIPGQVPEEVPLEGATAAVKPYDIMLVAREQ.

Position 448 (cysteine 448) interacts with heme.

It belongs to the cytochrome P450 family. Requires heme as cofactor.

It localises to the endoplasmic reticulum membrane. The protein resides in the microsome membrane. May be involved in the metabolism of insect hormones and in the breakdown of synthetic insecticides. The chain is Probable cytochrome P450 303a1 (Cyp303a1) from Drosophila melanogaster (Fruit fly).